A 253-amino-acid chain; its full sequence is 3-deoxy-manno-octulosonate cytidylyltransferase (253 aa).

Belongs to the KdsB family.

It localises to the cytoplasm. It carries out the reaction 3-deoxy-alpha-D-manno-oct-2-ulosonate + CTP = CMP-3-deoxy-beta-D-manno-octulosonate + diphosphate. It functions in the pathway nucleotide-sugar biosynthesis; CMP-3-deoxy-D-manno-octulosonate biosynthesis; CMP-3-deoxy-D-manno-octulosonate from 3-deoxy-D-manno-octulosonate and CTP: step 1/1. It participates in bacterial outer membrane biogenesis; lipopolysaccharide biosynthesis. Functionally, activates KDO (a required 8-carbon sugar) for incorporation into bacterial lipopolysaccharide in Gram-negative bacteria. This is 3-deoxy-manno-octulosonate cytidylyltransferase from Geotalea daltonii (strain DSM 22248 / JCM 15807 / FRC-32) (Geobacter daltonii).